We begin with the raw amino-acid sequence, 138 residues long: Ribonuclease kappa-A (138 aa).

The N-terminal stretch at 1-24 (MVLYFSPVLTFFLANFFNSKSTTT) is a signal peptide. Residues 25–75 (ENLQVFLVENQHRDSKRKINPTFSKKGIEVRQQNENLWSKIVALRFDYSVW) are Extracellular-facing. Residues 76–96 (GIIQLVLMMGLFFYINSVALI) traverse the membrane as a helical segment. Topologically, residues 97-138 (EDLPIDEEFNSVEEFYTAATSAYNQNAYTVGLPVHLCAYASI) are cytoplasmic.

Belongs to the RNase K family.

It is found in the membrane. Its function is as follows. Endoribonuclease. The sequence is that of Ribonuclease kappa-A from Ceratitis capitata (Mediterranean fruit fly).